A 364-amino-acid polypeptide reads, in one-letter code: MGTRGPSAPVDTTPAKTIVVYRNGDPFYVGKKFVLSRRRAATFEALLEQLTEQVDVPFGVRRLFTPTRGHRVLGLDALQAGGKYVAAGRERFKELDYIHIVPRKPAKIRKLKEIKPVVHCDINVPSKWQTYHRISRHINVFTNGRLFIPPAKIIIPKFSLSDWDIVLATIGEKVFPLGGVRKLFTMNGHLLGDSKDLQDNHFYVAVGLETFKYFPYWKSPRVPSEVQQRYANVEKNSQRKKKVDSKGKEPCKYDGIPPKTQDSVYYAKEEKKKTLAEPLVQRGAEGDVYKAPTPSKETQGALDVKEEHNVQLEVPVDQRQAEIVKEDEEIHENTPDFEGNKDKEDARLCEDVERKMAREWKPVD.

2 consecutive Doublecortin domains span residues 16–98 (KTIV…LDYI) and 136–217 (RHIN…FPYW). The segment at 233-255 (VEKNSQRKKKVDSKGKEPCKYDG) is disordered.

Expressed in testis and spermatozoa (at protein level).

It localises to the cell projection. It is found in the cilium. The protein localises to the flagellum. Its subcellular location is the cytoplasm. The sequence is that of Doublecortin domain-containing protein 2C from Homo sapiens (Human).